The following is a 273-amino-acid chain: Undecaprenyl-diphosphatase (273 aa).

The next 8 membrane-spanning stretches (helical) occupy residues 4–24 (MELWKAIILGMVEGLTEFAPV), 48–68 (AANTFKVVIQLGSILAAVVVF), 89–109 (LNLIHVIIGLLPAGVLGVLFE), 116–136 (LFSTKTVLIGLVLGALLMIAA), 152–172 (ITYKQAFFVGLMQCLSLWPGF), 193–213 (ADFTFIMAVPIMAGASGLSLL), 222–242 (ADIPFFIAGFFSAFVFALLAI), and 252–272 (IRLVPFAVYRIVLAVVIYFLY).

The protein belongs to the UppP family.

The protein localises to the cell membrane. It catalyses the reaction di-trans,octa-cis-undecaprenyl diphosphate + H2O = di-trans,octa-cis-undecaprenyl phosphate + phosphate + H(+). In terms of biological role, catalyzes the dephosphorylation of undecaprenyl diphosphate (UPP). Confers resistance to bacitracin. The polypeptide is Undecaprenyl-diphosphatase (Geobacillus kaustophilus (strain HTA426)).